The primary structure comprises 512 residues: NAD(P)H-quinone oxidoreductase subunit 2 B, chloroplastic (512 aa).

14 helical membrane passes run 31–51 (FIFP…IDLT), 57–77 (IPWL…ALLF), 99–119 (IFQF…VEYI), 124–144 (MAIT…MFLC), 149–169 (LITI…LSGY), 183–203 (YLLM…WLYG), 229–249 (ISIA…LAPF), 261–281 (PTPV…ALAT), 295–315 (WHLL…LIAI), 323–343 (MLAY…IVGD), 354–374 (YMLF…LFGL), 395–415 (ALSL…AGFF), 418–438 (LYLF…IGLL), and 484–504 (MIVC…IIAI).

Belongs to the complex I subunit 2 family. As to quaternary structure, NDH is composed of at least 16 different subunits, 5 of which are encoded in the nucleus.

It is found in the plastid. It localises to the chloroplast thylakoid membrane. It catalyses the reaction a plastoquinone + NADH + (n+1) H(+)(in) = a plastoquinol + NAD(+) + n H(+)(out). The enzyme catalyses a plastoquinone + NADPH + (n+1) H(+)(in) = a plastoquinol + NADP(+) + n H(+)(out). NDH shuttles electrons from NAD(P)H:plastoquinone, via FMN and iron-sulfur (Fe-S) centers, to quinones in the photosynthetic chain and possibly in a chloroplast respiratory chain. The immediate electron acceptor for the enzyme in this species is believed to be plastoquinone. Couples the redox reaction to proton translocation, and thus conserves the redox energy in a proton gradient. The chain is NAD(P)H-quinone oxidoreductase subunit 2 B, chloroplastic from Arabidopsis thaliana (Mouse-ear cress).